The primary structure comprises 187 residues: tRNA (mnm(5)s(2)U34)-methyltransferase (187 aa).

Asn31, Asn33, Asp51, Gln53, His77, and Glu78 together coordinate S-adenosyl-L-methionine.

It belongs to the methyltransferase superfamily. MnmM family. As to quaternary structure, homodimer.

The catalysed reaction is 5-aminomethyl-2-thiouridine(34) in tRNA + S-adenosyl-L-methionine = 5-methylaminomethyl-2-thiouridine(34) in tRNA + S-adenosyl-L-homocysteine + H(+). It participates in tRNA modification. In terms of biological role, involved in the biosynthesis of 5-methylaminomethyl-2-thiouridine (mnm(5)s(2)U) at the wobble position (U34) in tRNA. Catalyzes the transfer of a methyl group from S-adenosyl-L-methionine to nm(5)s(2)U34 to form mnm(5)s(2)U34. In Staphylococcus aureus (strain NCTC 8325 / PS 47), this protein is tRNA (mnm(5)s(2)U34)-methyltransferase.